The primary structure comprises 397 residues: Subtilisin-like protease 3 (397 aa).

The signal sequence occupies residues 1–19 (MGCIKVISVFLAAIAAVDA). A propeptide spanning residues 20-116 (RAFFHNRGGN…VEHDRVVKLA (97 aa)) is cleaved from the precursor. The region spanning 35–116 (SYIVVMKDGV…VEHDRVVKLA (82 aa)) is the Inhibitor I9 domain. One can recognise a Peptidase S8 domain in the interval 126 to 397 (TWGLGRVSHK…NRLLYNGSGR (272 aa)). Active-site charge relay system residues include aspartate 158 and histidine 189. The N-linked (GlcNAc...) asparagine glycan is linked to asparagine 250. Serine 344 functions as the Charge relay system in the catalytic mechanism. N-linked (GlcNAc...) asparagine glycosylation occurs at asparagine 393.

The protein belongs to the peptidase S8 family.

It localises to the secreted. Its function is as follows. Secreted subtilisin-like serine protease with keratinolytic activity that contributes to pathogenicity. This Arthroderma benhamiae (strain ATCC MYA-4681 / CBS 112371) (Trichophyton mentagrophytes) protein is Subtilisin-like protease 3 (SUB3).